Consider the following 413-residue polypeptide: Multifunctional CCA protein (413 aa).

ATP-binding residues include glycine 8 and arginine 11. CTP-binding residues include glycine 8 and arginine 11. The Mg(2+) site is built by aspartate 21 and aspartate 23. Arginine 91, arginine 137, and arginine 140 together coordinate ATP. CTP contacts are provided by arginine 91, arginine 137, and arginine 140. One can recognise an HD domain in the interval 228-329 (TGVHTLMTLS…VKLFDAIDAW (102 aa)).

It belongs to the tRNA nucleotidyltransferase/poly(A) polymerase family. Bacterial CCA-adding enzyme type 1 subfamily. As to quaternary structure, monomer. Can also form homodimers and oligomers. Requires Mg(2+) as cofactor. Ni(2+) is required as a cofactor.

It carries out the reaction a tRNA precursor + 2 CTP + ATP = a tRNA with a 3' CCA end + 3 diphosphate. It catalyses the reaction a tRNA with a 3' CCA end + 2 CTP + ATP = a tRNA with a 3' CCACCA end + 3 diphosphate. In terms of biological role, catalyzes the addition and repair of the essential 3'-terminal CCA sequence in tRNAs without using a nucleic acid template. Adds these three nucleotides in the order of C, C, and A to the tRNA nucleotide-73, using CTP and ATP as substrates and producing inorganic pyrophosphate. tRNA 3'-terminal CCA addition is required both for tRNA processing and repair. Also involved in tRNA surveillance by mediating tandem CCA addition to generate a CCACCA at the 3' terminus of unstable tRNAs. While stable tRNAs receive only 3'-terminal CCA, unstable tRNAs are marked with CCACCA and rapidly degraded. The sequence is that of Multifunctional CCA protein from Salmonella schwarzengrund (strain CVM19633).